Here is a 27-residue protein sequence, read N- to C-terminus: Secretin (27 aa).

A Valine amide modification is found at V27.

The protein belongs to the glucagon family.

Its subcellular location is the secreted. Its function is as follows. Hormone involved in different processes, such as regulation of the pH of the duodenal content, food intake and water homeostasis. Exerts its biological effects by binding to secretin receptor (SCTR), a G-protein coupled receptor expressed in the basolateral domain of several cells. Acts as a key gastrointestinal hormone by regulating the pH of the duodenal content. Secreted by S cells of the duodenum in the crypts of Lieberkuehn and regulates the pH of the duodenum by (1) inhibiting the secretion of gastric acid from the parietal cells of the stomach and (2) stimulating the production of bicarbonate (NaHCO(3)) from the ductal cells of the pancreas. Production of bicarbonate is essential to neutralize the pH and ensure no damage is done to the small intestine by the gastric acid. In addition to regulating the pH of the duodenal content, plays a central role in diet induced thermogenesis: acts as a non-sympathetic brown fat (BAT) activator mediating prandial thermogenesis, which consequentially induces satiation. Mechanistically, secretin released by the gut after a meal binds to secretin receptor (SCTR) in brown adipocytes, activating brown fat thermogenesis by stimulating lipolysis, which is sensed in the brain and promotes satiation. Also able to stimulate lipolysis in white adipocytes. Also plays an important role in cellular osmoregulation: released into the systemic circulation in response to hyperosmolality and acts at different levels in the hypothalamus, pituitary and kidney to regulate water homeostasis. Also plays a role in the central nervous system, possibly by acting as a neuropeptide hormone: required for hippocampal synaptic function and neural progenitor cells maintenance. This Canis lupus familiaris (Dog) protein is Secretin.